The primary structure comprises 339 residues: Heat-inducible transcription repressor HrcA (339 aa).

The protein belongs to the HrcA family.

Its function is as follows. Negative regulator of class I heat shock genes (grpE-dnaK-dnaJ and groELS operons). Prevents heat-shock induction of these operons. The chain is Heat-inducible transcription repressor HrcA from Parafrankia sp. (strain EAN1pec).